A 206-amino-acid chain; its full sequence is LexA repressor (206 aa).

The H-T-H motif DNA-binding region spans 28-48 (RAEIATRLGFKSANAAEEHLK). Active-site for autocatalytic cleavage activity residues include Ser123 and Lys160.

This sequence belongs to the peptidase S24 family. In terms of assembly, homodimer.

It carries out the reaction Hydrolysis of Ala-|-Gly bond in repressor LexA.. In terms of biological role, represses a number of genes involved in the response to DNA damage (SOS response), including recA and lexA. In the presence of single-stranded DNA, RecA interacts with LexA causing an autocatalytic cleavage which disrupts the DNA-binding part of LexA, leading to derepression of the SOS regulon and eventually DNA repair. The polypeptide is LexA repressor (Shewanella sp. (strain MR-7)).